A 121-amino-acid polypeptide reads, in one-letter code: Tachykinin-3 (121 aa).

A signal peptide spans 1–16 (MRIMLLFTAILAFSLA). A propeptide spanning residues 17–78 (QSFGAVCKEP…TDPKESTSPE (62 aa)) is cleaved from the precursor. M90 is subject to Methionine amide. The tract at residues 93 to 121 (RSVQPDSPTDVNQENVPSFGILKYPPRAE) is disordered. Positions 94 to 121 (SVQPDSPTDVNQENVPSFGILKYPPRAE) are excised as a propeptide. Residues 96-108 (QPDSPTDVNQENV) show a composition bias toward polar residues.

It belongs to the tachykinin family.

It localises to the secreted. Functionally, tachykinins are active peptides which excite neurons, evoke behavioral responses, are potent vasodilators and secretagogues, and contract (directly or indirectly) many smooth muscles. Is a critical central regulator of gonadal function. The sequence is that of Tachykinin-3 (TAC3) from Homo sapiens (Human).